The following is a 239-amino-acid chain: Ribonuclease PH (239 aa).

Phosphate-binding positions include Arg-86 and 124-126; that span reads GTR.

It belongs to the RNase PH family. Homohexameric ring arranged as a trimer of dimers.

The catalysed reaction is tRNA(n+1) + phosphate = tRNA(n) + a ribonucleoside 5'-diphosphate. Functionally, phosphorolytic 3'-5' exoribonuclease that plays an important role in tRNA 3'-end maturation. Removes nucleotide residues following the 3'-CCA terminus of tRNAs; can also add nucleotides to the ends of RNA molecules by using nucleoside diphosphates as substrates, but this may not be physiologically important. Probably plays a role in initiation of 16S rRNA degradation (leading to ribosome degradation) during starvation. The sequence is that of Ribonuclease PH from Allorhizobium ampelinum (strain ATCC BAA-846 / DSM 112012 / S4) (Agrobacterium vitis (strain S4)).